The primary structure comprises 152 residues: UPF0225 protein YchJ (152 aa).

The protein belongs to the UPF0225 family.

The protein is UPF0225 protein YchJ (ychJ) of Salmonella typhimurium (strain LT2 / SGSC1412 / ATCC 700720).